We begin with the raw amino-acid sequence, 317 residues long: HTH-type transcriptional regulator MetR (317 aa).

In terms of domain architecture, HTH lysR-type spans 1-59 (MIEVKHLKTLQALRNCGSLAAAAATLHQTQSALSHQFSDLEQRLGFRLFVRKSQPLRFT). The H-T-H motif DNA-binding region spans 19 to 38 (LAAAAATLHQTQSALSHQFS).

This sequence belongs to the LysR transcriptional regulatory family.

It localises to the cytoplasm. Its function is as follows. Control of the last step in methionine biosynthesis; MetR is a positive activator of the metA, metE and metH genes. It is also a negative regulator of its own expression. The sequence is that of HTH-type transcriptional regulator MetR (metR) from Escherichia coli O157:H7.